The sequence spans 552 residues: Putative pentatricopeptide repeat-containing protein At1g64310 (552 aa).

PPR repeat units lie at residues 39–69 (DPYF…FPER), 70–104 (SVFL…DTRP), 105–139 (DNFT…GLGF), 140–170 (DQIC…IPDP), 171–205 (DLAL…GHQP), 206–240 (NCYT…NLDS), 241–271 (HSYV…ISEP), 272–306 (DLVA…GKKP), 307–341 (DCVL…GLEL), 342–372 (DIKV…IPEK), 373–407 (NIVS…GLIP), 408–438 (DEIT…MKSE), and 444–474 (QTEH…LQKP). Residues 479 to 552 (ILGALLSCCE…GGKLPGISWF (74 aa)) form a type E motif; degenerate region.

This sequence belongs to the PPR family. PCMP-E subfamily.

The sequence is that of Putative pentatricopeptide repeat-containing protein At1g64310 (PCMP-E65) from Arabidopsis thaliana (Mouse-ear cress).